The following is a 409-amino-acid chain: Tyrosine--tRNA ligase (409 aa).

Position 35 (Y35) interacts with L-tyrosine. The short motif at 40 to 49 is the 'HIGH' region element; it reads PTGSSLHVGH. Positions 168 and 172 each coordinate L-tyrosine. The short motif at 228-232 is the 'KMSKS' region element; sequence KMGKT. K231 contributes to the ATP binding site. An S4 RNA-binding domain is found at 339–404; sequence IKVTDLFVQV…AGKKRVVRIV (66 aa).

This sequence belongs to the class-I aminoacyl-tRNA synthetase family. TyrS type 1 subfamily. As to quaternary structure, homodimer.

The protein resides in the cytoplasm. The catalysed reaction is tRNA(Tyr) + L-tyrosine + ATP = L-tyrosyl-tRNA(Tyr) + AMP + diphosphate + H(+). In terms of biological role, catalyzes the attachment of tyrosine to tRNA(Tyr) in a two-step reaction: tyrosine is first activated by ATP to form Tyr-AMP and then transferred to the acceptor end of tRNA(Tyr). The chain is Tyrosine--tRNA ligase from Treponema pallidum (strain Nichols).